A 335-amino-acid polypeptide reads, in one-letter code: Endo-beta-N-acetylglucosaminidase F2 (335 aa).

An N-terminal signal peptide occupies residues 1 to 45 (MKTANFSFALCLSVVIMLFIKCTRSEQDLSVTKDAIAQKSGVTVS). A GH18 domain is found at 61–321 (QISAGYYRTW…SSNDNTLRAP (261 aa)). Ser73, Ser89, and Ser143 each carry an O-linked (Man...) serine glycan. Catalysis depends on Glu171, which acts as the Proton donor.

Belongs to the glycosyl hydrolase 18 family. In terms of assembly, monomer. In terms of processing, carbohydrates at Ser-73, Ser-89 and Ser-143 consist of (2-OMe)Man1-4GlcNAcU1-4GlcU1-4Glc1-4(2-OMe)GlcU1-4[(2-OMe)Rham1-2]Man.

It is found in the secreted. The enzyme catalyses an N(4)-(oligosaccharide-(1-&gt;3)-[oligosaccharide-(1-&gt;6)]-beta-D-Man-(1-&gt;4)-beta-D-GlcNAc-(1-&gt;4)-alpha-D-GlcNAc)-L-asparaginyl-[protein] + H2O = an oligosaccharide-(1-&gt;3)-[oligosaccharide-(1-&gt;6)]-beta-D-Man-(1-&gt;4)-D-GlcNAc + N(4)-(N-acetyl-beta-D-glucosaminyl)-L-asparaginyl-[protein]. Endohydrolysis of the di-N-acetylchitobiosyl unit in high-mannose glycopeptides and glycoproteins. Complex biantennary glycans are the preferred substrates. Tri- and tetraantennary glycans are not hydrolyzed, and high mannose glycans are very poor substrates. This is Endo-beta-N-acetylglucosaminidase F2 (endOF2) from Elizabethkingia meningoseptica (Chryseobacterium meningosepticum).